The following is a 259-amino-acid chain: (3R)-3-hydroxyacyl-CoA dehydrogenase (259 aa).

NAD(+)-binding positions include 13–21 (LVTGAGSGI) and 40–41 (DL). S58 bears the Phosphoserine mark. An N6-acetyllysine modification is found at K66. Position 72 to 74 (72 to 74 (ADV)) interacts with NAD(+). S154 is a binding site for substrate. N6-succinyllysine is present on K158. The active-site Proton acceptor is Y167. NAD(+) is bound by residues 167–171 (YASSK) and 200–202 (IAT). Position 171 is an N6-succinyllysine (K171).

The protein belongs to the short-chain dehydrogenases/reductases (SDR) family. In terms of assembly, heterotetramer with CBR4; contains two molecules of HSD17B8 and CBR4. Expressed in ovary at protein level.

The protein localises to the mitochondrion matrix. It catalyses the reaction a (3R)-3-hydroxyacyl-CoA + NAD(+) = a 3-oxoacyl-CoA + NADH + H(+). The enzyme catalyses 17beta-estradiol + NAD(+) = estrone + NADH + H(+). It carries out the reaction testosterone + NAD(+) = androst-4-ene-3,17-dione + NADH + H(+). The catalysed reaction is 17beta-hydroxy-5alpha-androstan-3-one + NAD(+) = 5alpha-androstan-3,17-dione + NADH + H(+). It participates in steroid biosynthesis; estrogen biosynthesis. The protein operates within lipid metabolism; fatty acid biosynthesis. It functions in the pathway lipid metabolism; mitochondrial fatty acid beta-oxidation. Its function is as follows. Required for the solubility and assembly of the heterotetramer 3-ketoacyl-[acyl carrier protein] (ACP) reductase functional complex (KAR or KAR1) that forms part of the mitochondrial fatty acid synthase (mtFAS). Alpha-subunit of the KAR complex that acts as scaffold protein required for the stability of carbonyl reductase type-4 (CBR4, beta-subunit of the KAR complex) and for its 3-ketoacyl-ACP reductase activity, thereby participating in mitochondrial fatty acid biosynthesis. Catalyzes the NAD-dependent conversion of (3R)-3-hydroxyacyl-CoA into 3-ketoacyl-CoA (3-oxoacyl-CoA) with no chain length preference; this enzymatic activity is not needed for the KAR function. Prefers (3R)-3-hydroxyacyl-CoA over (3S)-3-hydroxyacyl-CoA and displays enzymatic activity only in the presence of NAD(+). Cooperates with enoyl-CoA hydratase 1 in mitochondria, together they constitute an alternative route to the auxiliary enzyme pathways for the breakdown of Z-PUFA (cis polyunsaturated fatty acid) enoyl-esters. NAD-dependent 17-beta-hydroxysteroid dehydrogenase with highest activity towards estradiol (17beta-estradiol or E2). Has very low activity towards testosterone and dihydrotestosterone (17beta-hydroxy-5alpha-androstan-3-one). Primarily an oxidative enzyme, it can switch to a reductive mode determined in the appropriate physiologic milieu and catalyze the reduction of estrone (E1) to form biologically active 17beta-estradiol. The protein is (3R)-3-hydroxyacyl-CoA dehydrogenase (Hsd17b8) of Rattus norvegicus (Rat).